A 424-amino-acid chain; its full sequence is Gamma-glutamyl phosphate reductase (424 aa).

The protein belongs to the gamma-glutamyl phosphate reductase family.

The protein localises to the cytoplasm. It carries out the reaction L-glutamate 5-semialdehyde + phosphate + NADP(+) = L-glutamyl 5-phosphate + NADPH + H(+). Its pathway is amino-acid biosynthesis; L-proline biosynthesis; L-glutamate 5-semialdehyde from L-glutamate: step 2/2. Catalyzes the NADPH-dependent reduction of L-glutamate 5-phosphate into L-glutamate 5-semialdehyde and phosphate. The product spontaneously undergoes cyclization to form 1-pyrroline-5-carboxylate. The sequence is that of Gamma-glutamyl phosphate reductase from Dehalococcoides mccartyi (strain ATCC BAA-2266 / KCTC 15142 / 195) (Dehalococcoides ethenogenes (strain 195)).